A 393-amino-acid chain; its full sequence is S-adenosylmethionine synthase (393 aa).

E10 contributes to the Mg(2+) binding site. Position 16 (H16) interacts with ATP. E44 is a binding site for K(+). L-methionine is bound by residues E57 and Q100. ATP is bound by residues 168–170, 236–239, D247, 253–254, A270, K274, and K278; these read DGK, SGRF, and RK. An L-methionine-binding site is contributed by D247. K278 is a binding site for L-methionine.

It belongs to the AdoMet synthase family. In terms of assembly, homotetramer. The cofactor is Mn(2+). Mg(2+) serves as cofactor. Requires Co(2+) as cofactor. It depends on K(+) as a cofactor.

It is found in the cytoplasm. It carries out the reaction L-methionine + ATP + H2O = S-adenosyl-L-methionine + phosphate + diphosphate. The protein operates within amino-acid biosynthesis; S-adenosyl-L-methionine biosynthesis; S-adenosyl-L-methionine from L-methionine: step 1/1. Catalyzes the formation of S-adenosylmethionine from methionine and ATP. The reaction comprises two steps that are both catalyzed by the same enzyme: formation of S-adenosylmethionine (AdoMet) and triphosphate, and subsequent hydrolysis of the triphosphate. This Musa acuminata (Banana) protein is S-adenosylmethionine synthase (METK).